The following is a 120-amino-acid chain: cAMP-responsive element-binding protein-like 2 (120 aa).

A disordered region spans residues 1–24; that stretch reads MDDSKVVGGKVKKPGKRGRKPAKI. Positions 10 to 21 are enriched in basic residues; that stretch reads KVKKPGKRGRKP. The bZIP domain maps to 23 to 86; it reads KIDLKAKLER…MAMDQGKIPS (64 aa). Residues 29–60 form a basic motif region; that stretch reads KLERSRQSARECRARKKLRYQYLEELVSSRER. Residues 62–69 form a leucine-zipper region; that stretch reads ICALREEL. A disordered region spans residues 93 to 120; that stretch reads TGEEQNKSQQNSSRHTKAGKTDANSNSW.

This sequence belongs to the bZIP family. ATF subfamily. Interacts with CREB1; regulates CREB1 phosphorylation, stability and transcriptional activity. In terms of processing, phosphorylated by AMPK.

It is found in the nucleus. Its function is as follows. Probable regulator of CREB1 transcriptional activity which is involved in adipose cells differentiation. May also play a regulatory role in the cell cycle. Identification in a chromosomal region frequently deleted in various cancers suggests that it might act as a tumor suppressor. The chain is cAMP-responsive element-binding protein-like 2 (CREBL2) from Homo sapiens (Human).